Here is a 2112-residue protein sequence, read N- to C-terminus: Phenolphthiocerol synthesis polyketide synthase type I Pks15/1 (2112 aa).

The Ketosynthase family 3 (KS3) domain occupies 46-469; the sequence is TEPVAVVGIG…GTNAHLILEE (424 aa). Catalysis depends on for beta-ketoacyl synthase activity residues Cys-216, His-351, and His-391. Positions 579-893 are acyltransferase; sequence TVVVFPGQGA…GQVFTTGVPV (315 aa). The active-site For acyltransferase activity is the Ser-670. The N-terminal hotdog fold stretch occupies residues 941-1063; it reads HALLGAVVER…GMLGVAAAET (123 aa). Residues 941–1101 are dehydratase; that stretch reads HALLGAVVER…YAYGPAFQGL (161 aa). The 275-residue stretch at 941–1215 folds into the PKS/mFAS DH domain; the sequence is HALLGAVVER…TRPITAEQLR (275 aa). His-973 (proton acceptor; for dehydratase activity) is an active-site residue. Positions 1075–1215 are C-terminal hotdog fold; it reads AESVDISDGY…TRPITAEQLR (141 aa). Catalysis depends on Asp-1136, which acts as the Proton donor; for dehydratase activity. Positions 1406-1711 are enoylreductase; that stretch reads GTLEDLVIQP…QARHIGKVVL (306 aa). Residues 1536–1553 and 1725–1740 each bind NADP(+); these read VLIHAGTGGVGMAAVQLA and TVVITGATGAVGGVLA. Residues 1724 to 1905 form a beta-ketoacyl reductase region; it reads GTVVITGATG…SLAWGLWEQP (182 aa). Residues 2010–2085 enclose the Carrier domain; the sequence is ELLVGLVCLQ…AVAEYVAQQM (76 aa). The residue at position 2045 (Ser-2045) is an O-(pantetheine 4'-phosphoryl)serine. Residues 2084 to 2100 are compositionally biased toward polar residues; the sequence is QMSGSRPTESGDPTSQV. Residues 2084–2112 are disordered; that stretch reads QMSGSRPTESGDPTSQVVEPAAAEVSVHA.

Belongs to the thiolase-like superfamily. Beta-ketoacyl-ACP synthases family. It depends on pantetheine 4'-phosphate as a cofactor.

It carries out the reaction a fatty acyl-[ACP] + malonyl-[ACP] + H(+) = a 3-oxoacyl-[ACP] + holo-[ACP] + CO2. The protein operates within lipid metabolism; fatty acid biosynthesis. Catalyzes the elongation by iterative transfer of p-hydroxybenzoyl group from FadD22 (pHBA-S-FAdD22) to form p-hydroxyphenylalkanoate (pHPA) intermediates during phenolphthiocerol (PPOL) biosynthesis. PPOL is an important intermediate in the biosynthesis of phenolic glycolipid (mycosid B). This chain is Phenolphthiocerol synthesis polyketide synthase type I Pks15/1 (pks15/1), found in Mycobacterium bovis (strain ATCC BAA-935 / AF2122/97).